The chain runs to 95 residues: Large ribosomal subunit protein uL22c (95 aa).

The protein belongs to the universal ribosomal protein uL22 family. Part of the 50S ribosomal subunit.

The protein resides in the plastid. The protein localises to the chloroplast. In terms of biological role, this protein binds specifically to 23S rRNA. Functionally, the globular domain of the protein is located near the polypeptide exit tunnel on the outside of the subunit, while an extended beta-hairpin is found that lines the wall of the exit tunnel in the center of the 70S ribosome. This is Large ribosomal subunit protein uL22c (rpl22) from Cyanidioschyzon merolae (strain NIES-3377 / 10D) (Unicellular red alga).